The chain runs to 466 residues: Glutamate-1-semialdehyde 2,1-aminomutase (466 aa).

Residue Lys292 is modified to N6-(pyridoxal phosphate)lysine.

Belongs to the class-III pyridoxal-phosphate-dependent aminotransferase family. HemL subfamily. As to quaternary structure, homodimer. Pyridoxal 5'-phosphate serves as cofactor.

It localises to the cytoplasm. It catalyses the reaction (S)-4-amino-5-oxopentanoate = 5-aminolevulinate. It functions in the pathway porphyrin-containing compound metabolism; protoporphyrin-IX biosynthesis; 5-aminolevulinate from L-glutamyl-tRNA(Glu): step 2/2. In Tropheryma whipplei (strain TW08/27) (Whipple's bacillus), this protein is Glutamate-1-semialdehyde 2,1-aminomutase.